Here is a 469-residue protein sequence, read N- to C-terminus: Glutamate--tRNA ligase (469 aa).

The 'HIGH' region signature appears at 9–19 (PSPTGFLHVGG). 4 residues coordinate Zn(2+): cysteine 98, cysteine 100, cysteine 125, and aspartate 127. A 'KMSKS' region motif is present at residues 236 to 240 (KLSKR). Residue lysine 239 coordinates ATP.

It belongs to the class-I aminoacyl-tRNA synthetase family. Glutamate--tRNA ligase type 1 subfamily. Monomer. Zn(2+) serves as cofactor.

The protein localises to the cytoplasm. The enzyme catalyses tRNA(Glu) + L-glutamate + ATP = L-glutamyl-tRNA(Glu) + AMP + diphosphate. In terms of biological role, catalyzes the attachment of glutamate to tRNA(Glu) in a two-step reaction: glutamate is first activated by ATP to form Glu-AMP and then transferred to the acceptor end of tRNA(Glu). In Shewanella baltica (strain OS185), this protein is Glutamate--tRNA ligase.